A 287-amino-acid chain; its full sequence is Pyridoxal kinase PdxY (287 aa).

Substrate is bound by residues Ser10 and 45–46; that span reads TQ. Residues Asp112, Ala144, Glu149, Lys182, and 209–212 contribute to the ATP site; that span reads RPLV. Position 224 (Asp224) interacts with substrate.

Belongs to the pyridoxine kinase family. PdxY subfamily. As to quaternary structure, homodimer. Mg(2+) is required as a cofactor.

It carries out the reaction pyridoxal + ATP = pyridoxal 5'-phosphate + ADP + H(+). The protein operates within cofactor metabolism; pyridoxal 5'-phosphate salvage; pyridoxal 5'-phosphate from pyridoxal: step 1/1. Functionally, pyridoxal kinase involved in the salvage pathway of pyridoxal 5'-phosphate (PLP). Catalyzes the phosphorylation of pyridoxal to PLP. In Shigella boydii serotype 4 (strain Sb227), this protein is Pyridoxal kinase PdxY.